Consider the following 953-residue polypeptide: Translation initiation factor IF-2 (953 aa).

Positions 53–368 (AKKAVAGTSE…PVTERKFHEL (316 aa)) are disordered. 2 stretches are compositionally biased toward basic and acidic residues: residues 135 to 151 (FKAE…ERRK) and 162 to 190 (RNDR…RNRQ). Residues 191–214 (EQGNQHRNQGQSQYNQQRQSFNQG) are compositionally biased toward low complexity. Residues 236–266 (RSSEERFKQAKANKEALREQNKRKEQAKLED) show a composition bias toward basic and acidic residues. Residues 274–288 (PKPTAKAPATPAPTA) are compositionally biased toward low complexity. Over residues 301–318 (ARPDKERDNFDHEEDGPR) the composition is skewed to basic and acidic residues. Residues 332–341 (NQKNSNWNNN) show a composition bias toward low complexity. A tr-type G domain is found at 455–622 (ERPPVVTIMG…TVLLVAEIQE (168 aa)). Residues 464 to 471 (GHVDHGKT) form a G1 region. 464–471 (GHVDHGKT) contributes to the GTP binding site. Residues 489-493 (GITQH) are G2. Positions 510 to 513 (DTPG) are G3. GTP is bound by residues 510–514 (DTPGH) and 564–567 (NKID). The segment at 564–567 (NKID) is G4. The G5 stretch occupies residues 600 to 602 (SAK).

The protein belongs to the TRAFAC class translation factor GTPase superfamily. Classic translation factor GTPase family. IF-2 subfamily.

It is found in the cytoplasm. Its function is as follows. One of the essential components for the initiation of protein synthesis. Protects formylmethionyl-tRNA from spontaneous hydrolysis and promotes its binding to the 30S ribosomal subunits. Also involved in the hydrolysis of GTP during the formation of the 70S ribosomal complex. The protein is Translation initiation factor IF-2 of Streptococcus gordonii (strain Challis / ATCC 35105 / BCRC 15272 / CH1 / DL1 / V288).